The following is a 308-amino-acid chain: tRNA dimethylallyltransferase (308 aa).

Position 9–16 (Gly-9–Thr-16) interacts with ATP. Thr-11–Thr-16 provides a ligand contact to substrate. The interaction with substrate tRNA stretch occupies residues Asp-34 to Gln-37.

The protein belongs to the IPP transferase family. As to quaternary structure, monomer. Requires Mg(2+) as cofactor.

The catalysed reaction is adenosine(37) in tRNA + dimethylallyl diphosphate = N(6)-dimethylallyladenosine(37) in tRNA + diphosphate. Catalyzes the transfer of a dimethylallyl group onto the adenine at position 37 in tRNAs that read codons beginning with uridine, leading to the formation of N6-(dimethylallyl)adenosine (i(6)A). This chain is tRNA dimethylallyltransferase, found in Lactobacillus delbrueckii subsp. bulgaricus (strain ATCC 11842 / DSM 20081 / BCRC 10696 / JCM 1002 / NBRC 13953 / NCIMB 11778 / NCTC 12712 / WDCM 00102 / Lb 14).